A 477-amino-acid chain; its full sequence is Glycogen synthase (477 aa).

An ADP-alpha-D-glucose-binding site is contributed by K15.

It belongs to the glycosyltransferase 1 family. Bacterial/plant glycogen synthase subfamily.

The enzyme catalyses [(1-&gt;4)-alpha-D-glucosyl](n) + ADP-alpha-D-glucose = [(1-&gt;4)-alpha-D-glucosyl](n+1) + ADP + H(+). Its pathway is glycan biosynthesis; glycogen biosynthesis. Functionally, synthesizes alpha-1,4-glucan chains using ADP-glucose. The polypeptide is Glycogen synthase (glgA) (Salmonella typhimurium (strain LT2 / SGSC1412 / ATCC 700720)).